Here is a 365-residue protein sequence, read N- to C-terminus: Autoinducer 2-binding periplasmic protein LuxP (365 aa).

A signal peptide spans 1–23 (MKKALLFSLISMVGFSPASQATQ).

This sequence belongs to the bacterial solute-binding protein 2 family.

It is found in the periplasm. Functionally, binds to the signaling molecule autoinducer 2 (AI-2), a furanosyl borate diester, (3a-methyl-5,6-dihydrofuro-[2,3d][1,3,2]dioxaborole-2,2,6,6a-tetraol). This complex then interacts with the LuxQ sensor protein. The chain is Autoinducer 2-binding periplasmic protein LuxP (luxP) from Vibrio harveyi (Beneckea harveyi).